The following is a 114-amino-acid chain: Protein ORF3 (114 aa).

2 hydrophobic regions span residues 6 to 24 (WALGLFCCCSSCFCLCCSR) and 33 to 53 (AVVGGAAAVPAVVSGVTGLIL). The interaction with host HPX stretch occupies residues 28–68 (VSRLAAVVGGAAAVPAVVSGVTGLILSPSQSPIFIQPTPSP). Residues 48-72 (VTGLILSPSQSPIFIQPTPSPRMSP) are interaction with the capsid protein. Ser-71 carries the phosphoserine; by host modification. The tract at residues 72 to 114 (PLRPGLDLVFANPSDHSAPLGATRPSAPPLPHVVDLPQLGPRR) is homodimerization, and interaction with host AMBP/bikunin. The interval 85 to 114 (SDHSAPLGATRPSAPPLPHVVDLPQLGPRR) is disordered. The interaction with host SRC, HCK, FYN, PIK3R3 and GRB2 stretch occupies residues 95–104 (RPSAPPLPHV). Positions 96–99 (PSAP) match the PTAP/PSAP motif motif.

This sequence belongs to the hepevirus ORF3 protein family. Forms homooligomers. Interacts with host SRC, HCK, FYN, PIK3R3 and GRB2 (via SH3 domain); binding does not activate the kinases. Interacts with host AMBP/bikunin and AMBP/alpha-1-microglobulin peptides. Interacts with host HPX/hemopexin. Interacts (when phosphorylated) with capsid protein ORF2. Interacts with host TSG101; this interaction plays a role in viral release from the host cell. Interacts with host SIRPA; this interaction down-regulates the phosphorylation of host IRF3. In terms of processing, palmitoylated in the N-terminus.

The protein localises to the host endoplasmic reticulum membrane. Its subcellular location is the host cytoplasm. The protein resides in the host cytoskeleton. It is found in the virion. It localises to the host cell membrane. In terms of biological role, small multifunctional phosphoprotein involved in virion morphogenesis, egress and counteracting host innate immunity. Plays critical roles in the final steps of viral release by interacting with host TSG101, a member of the vacuolar protein-sorting pathway and using other cellular host proteins involved in vesicle formation pathway. Also acts as a viroporin and forms ion conductive pores allowing viral particle release. Impairs the generation of type I interferon by down-regulating host TLR3 and TLR7 as well as their downstream signaling pathways. Down-regulates the phosphorylation of host IRF3 via the interaction with host SIRP-alpha, thereby inhibiting IFN-I expression. Interacts with host microtubules. The sequence is that of Protein ORF3 from Hepatitis E virus genotype 1 (isolate Human/India/Hyderabad) (HEV-1).